The chain runs to 314 residues: Thymidylate synthase (314 aa).

DUMP-binding positions include Arg-21 and 176–177 (RR). The active-site Nucleophile is the Cys-196. DUMP is bound by residues 216-219 (RSAD), Asn-227, and 257-259 (HLY). Asp-219 contributes to the (6R)-5,10-methylene-5,6,7,8-tetrahydrofolate binding site. Ser-313 lines the (6R)-5,10-methylene-5,6,7,8-tetrahydrofolate pocket.

The protein belongs to the thymidylate synthase family. Bacterial-type ThyA subfamily. In terms of assembly, homodimer.

Its subcellular location is the cytoplasm. It catalyses the reaction dUMP + (6R)-5,10-methylene-5,6,7,8-tetrahydrofolate = 7,8-dihydrofolate + dTMP. It participates in pyrimidine metabolism; dTTP biosynthesis. Its function is as follows. Catalyzes the reductive methylation of 2'-deoxyuridine-5'-monophosphate (dUMP) to 2'-deoxythymidine-5'-monophosphate (dTMP) while utilizing 5,10-methylenetetrahydrofolate (mTHF) as the methyl donor and reductant in the reaction, yielding dihydrofolate (DHF) as a by-product. This enzymatic reaction provides an intracellular de novo source of dTMP, an essential precursor for DNA biosynthesis. The chain is Thymidylate synthase from Listeria monocytogenes serovar 1/2a (strain ATCC BAA-679 / EGD-e).